We begin with the raw amino-acid sequence, 190 residues long: Iron-sulfur protein (190 aa).

A 4Fe-4S ferredoxin-type 1 domain is found at 8-36; sequence VIIYANPDHCLSCHSCELACAVAHSGGHD. Cysteine 17, cysteine 20, cysteine 23, cysteine 27, cysteine 65, cysteine 68, cysteine 73, cysteine 77, cysteine 96, cysteine 99, cysteine 102, cysteine 106, cysteine 133, cysteine 136, cysteine 150, and cysteine 154 together coordinate [4Fe-4S] cluster. 2 4Fe-4S ferredoxin-type domains span residues 87–116 and 133–164; these read GQVQ…VRSE and CDLC…MVDL.

The carbon monoxide dehydrogenase (CODH) oxidizes carbon monoxide coupled, via CooF, to the reduction of a hydrogen cation by a hydrogenase (probably CooH). CooF is required in stoichiometric amounts in vitro for anchoring CODH to the membrane as well as for conveying the electrons to the hydrogenase. The protein is Iron-sulfur protein (cooF) of Rhodospirillum rubrum.